Here is a 290-residue protein sequence, read N- to C-terminus: Picrinine-N-methytransferase (290 aa).

The interval 71 to 80 (MLDVGCGIGG) is SAM motif I. The short motif at 133–139 (DGTFDLV) is the Vacuolar targeting signal element. The interval 134–142 (GTFDLVFTI) is SAM motif II. An SAM motif III region spans residues 161–170 (VAAPGAPIVI).

This sequence belongs to the class I-like SAM-binding methyltransferase superfamily. gTMT family. Homodimer. In terms of tissue distribution, accumulates in tissues actively synthesizing monoterpenoid indole alkaloids (MIAs) (at protein level). Mainly expressed in young leaves and, to a lower extent, in roots and stems.

The protein resides in the vacuole membrane. The enzyme catalyses picrinine + S-adenosyl-L-methionine = ervincine + S-adenosyl-L-homocysteine + H(+). Its pathway is alkaloid biosynthesis; vindoline biosynthesis. Functionally, S-adenosyl-L-methionine-dependent N-methyltransferase involved in the biosynthesis of biologically active monoterpenoid indole alkaloids (MIAs) natural products including vindoline. Catalyzes the conversion of picrinine to N-methylpicrinine (ervincine). Also accepts, with low efficiency, 21-hydroxycyclolochnericine and norajmaline as substrates. In Rauvolfia serpentina (Serpentine wood), this protein is Picrinine-N-methytransferase.